A 578-amino-acid chain; its full sequence is Membrane protein insertase YidC (578 aa).

Residues 3–23 (IQRSILIVALAVVSYLLVLQW) traverse the membrane as a helical segment. The segment at 34–72 (AASASMNTTQGLPDTPSASGTSSDVPTAQSSAAGSEAAD) is disordered. A compositionally biased stretch (polar residues) spans 37-66 (ASMNTTQGLPDTPSASGTSSDVPTAQSSAA). Helical transmembrane passes span 361–381 (LELT…FWLL), 387–407 (LIGN…LAFF), 457–477 (LGGC…YWVL), 500–520 (PFFI…MLNP), and 535–555 (PIIF…YWVV).

The protein belongs to the OXA1/ALB3/YidC family. Type 1 subfamily. Interacts with the Sec translocase complex via SecD. Specifically interacts with transmembrane segments of nascent integral membrane proteins during membrane integration.

It localises to the cell inner membrane. Required for the insertion and/or proper folding and/or complex formation of integral membrane proteins into the membrane. Involved in integration of membrane proteins that insert both dependently and independently of the Sec translocase complex, as well as at least some lipoproteins. Aids folding of multispanning membrane proteins. This chain is Membrane protein insertase YidC, found in Pseudomonas aeruginosa (strain LESB58).